A 482-amino-acid polypeptide reads, in one-letter code: Arginine/ornithine antiporter (482 aa).

Residues 1 to 10 lie on the Cytoplasmic side of the membrane; sequence MSQESSQKLR. A helical membrane pass occupies residues 11–31; the sequence is LGALTALVVGSMIGGGIFSLP. Over 32–40 the chain is Periplasmic; sequence QNMAASADV. Residues 41-61 form a helical membrane-spanning segment; sequence GAVLIGWAITAVGMLTLAFVF. Over 62 to 100 the chain is Cytoplasmic; it reads QTLANRKPELDGGVYAYAKAGFGDYMGFSSAWGYWISAW. Residues 101 to 121 traverse the membrane as a helical segment; sequence LGNVGYFVLLFSTLGYFFPIF. At 122-124 the chain is on the periplasmic side; that stretch reads GKG. A helical transmembrane segment spans residues 125–145; that stretch reads DTVAAIVCASVLLWALHFLVL. The Cytoplasmic segment spans residues 146-156; that stretch reads RGIKEAAFINT. Residues 157–177 traverse the membrane as a helical segment; that stretch reads VTTVAKVVPLFLFILICLFAF. Residues 178–202 lie on the Periplasmic side of the membrane; it reads KLDIFTADIWGKSNPDLGSVMNQVR. Residues 203–223 traverse the membrane as a helical segment; the sequence is NMMLVTVWVFIGIEGASIFSS. Residues 224–235 are Cytoplasmic-facing; that stretch reads RAEKRSDVGKAT. A helical transmembrane segment spans residues 236–256; sequence VIGFITVLLLLVLVNVLSMGV. The Periplasmic portion of the chain corresponds to 257-283; it reads MTQPELAKLQNPSMALVLEHVVGHWGA. A helical transmembrane segment spans residues 284 to 304; that stretch reads VLISVGLLISLLGALLSWVLL. Residues 305–333 are Cytoplasmic-facing; the sequence is CAEIMFAAAKDHTMPEFLRRENANQVPAN. A helical transmembrane segment spans residues 334–354; it reads ALWLTNICVQVFLVVVFFTSG. Residues 355 to 365 lie on the Periplasmic side of the membrane; the sequence is DPDGMDPYTKM. Residues 366–386 form a helical membrane-spanning segment; the sequence is LLLATSMILIPYFWSAAYGLL. The Cytoplasmic segment spans residues 387–403; it reads LTLKGETYENDARERSK. The chain crosses the membrane as a helical span at residues 404-424; the sequence is DLVIAGIAVAYAVWLLYAGGL. Lys425 is a topological domain (periplasmic). Residues 426–446 traverse the membrane as a helical segment; sequence YLLLSALLYAPGAILFAKAKH. Over 447–458 the chain is Cytoplasmic; the sequence is EVGQPIFTGIEK. Residues 459-479 traverse the membrane as a helical segment; that stretch reads LIFAAVVIGALVAAYGLYDGF. At 480–482 the chain is on the periplasmic side; that stretch reads LTL.

Belongs to the amino acid-polyamine-organocation (APC) superfamily. Basic amino acid/polyamine antiporter (APA) (TC 2.A.3.2) family.

Its subcellular location is the cell inner membrane. The enzyme catalyses L-ornithine(in) + L-arginine(out) = L-ornithine(out) + L-arginine(in). Functionally, catalyzes electroneutral exchange between arginine and ornithine to allow high-efficiency energy conversion in the arginine deiminase pathway. Also mediates the proton motive force-driven uptake of arginine and ornithine, but the exchange is several orders of magnitude faster than the proton motive force-driven transport. This Pseudomonas aeruginosa (strain ATCC 15692 / DSM 22644 / CIP 104116 / JCM 14847 / LMG 12228 / 1C / PRS 101 / PAO1) protein is Arginine/ornithine antiporter.